A 302-amino-acid chain; its full sequence is Oxygen-dependent coproporphyrinogen-III oxidase (302 aa).

Ser94 contacts substrate. A divalent metal cation contacts are provided by His98 and His108. The Proton donor role is filled by His108. 110–112 (NVR) is a binding site for substrate. A divalent metal cation is bound by residues His147 and His177. The tract at residues 242–277 (YVEFNLVYDRGTLFGLQTGGRTESILMSMPPLARWE) is important for dimerization. 260–262 (GGR) lines the substrate pocket.

This sequence belongs to the aerobic coproporphyrinogen-III oxidase family. Homodimer. A divalent metal cation serves as cofactor.

Its subcellular location is the cytoplasm. The catalysed reaction is coproporphyrinogen III + O2 + 2 H(+) = protoporphyrinogen IX + 2 CO2 + 2 H2O. The protein operates within porphyrin-containing compound metabolism; protoporphyrin-IX biosynthesis; protoporphyrinogen-IX from coproporphyrinogen-III (O2 route): step 1/1. Functionally, involved in the heme biosynthesis. Catalyzes the aerobic oxidative decarboxylation of propionate groups of rings A and B of coproporphyrinogen-III to yield the vinyl groups in protoporphyrinogen-IX. This Aeromonas salmonicida (strain A449) protein is Oxygen-dependent coproporphyrinogen-III oxidase.